Reading from the N-terminus, the 192-residue chain is GTP cyclohydrolase 1 (192 aa).

Residues cysteine 76, histidine 79, and cysteine 148 each coordinate Zn(2+).

This sequence belongs to the GTP cyclohydrolase I family. Toroid-shaped homodecamer, composed of two pentamers of five dimers.

The catalysed reaction is GTP + H2O = 7,8-dihydroneopterin 3'-triphosphate + formate + H(+). Its pathway is cofactor biosynthesis; 7,8-dihydroneopterin triphosphate biosynthesis; 7,8-dihydroneopterin triphosphate from GTP: step 1/1. In Carboxydothermus hydrogenoformans (strain ATCC BAA-161 / DSM 6008 / Z-2901), this protein is GTP cyclohydrolase 1.